A 129-amino-acid chain; its full sequence is Glyoxalase domain-containing protein 5 homolog (129 aa).

The 124-residue stretch at 5–128 folds into the VOC domain; it reads RLDHLVLTVS…DYNLIEISNY (124 aa).

Belongs to the glyoxalase I family.

In Dictyostelium discoideum (Social amoeba), this protein is Glyoxalase domain-containing protein 5 homolog (glod5).